The following is a 147-amino-acid chain: Hemoglobin subunit gamma-1 (147 aa).

The region spanning 3–147 (NFTAEDKAAI…VASALGSRYH (145 aa)) is the Globin domain. The residue at position 13 (Thr13) is a Phosphothreonine. Phosphoserine is present on residues Ser45, Ser51, and Ser53. Lys60 bears the N6-acetyllysine mark. His64 serves as a coordination point for heme b. Lys83 is subject to N6-acetyllysine. His93 contacts heme b. The residue at position 94 (Cys94) is an S-nitrosocysteine. Ser140 is modified (phosphoserine).

The protein belongs to the globin family. Heterotetramer of two alpha chains and two gamma chains in fetal hemoglobin (Hb F). In terms of tissue distribution, red blood cells.

Functionally, gamma chains make up the fetal hemoglobin F, in combination with alpha chains. This is Hemoglobin subunit gamma-1 (HBG1) from Sapajus apella (Brown-capped capuchin).